A 317-amino-acid chain; its full sequence is Olfactory receptor 10AD1 (317 aa).

Residues 1 to 25 are Extracellular-facing; the sequence is MLRNGSIVTEFILVGFQQSSTSTRA. N-linked (GlcNAc...) asparagine glycosylation occurs at N4. The helical transmembrane segment at 26 to 46 threads the bilayer; it reads LLFALFLALYSLTMAMNGLII. Topologically, residues 47 to 55 are cytoplasmic; the sequence is FITSWTDPK. A helical transmembrane segment spans residues 56 to 76; the sequence is LNSPMYFFLGHLSLLDVCFIT. The Extracellular portion of the chain corresponds to 77–100; that stretch reads TTIPQMLIHLVVRDHIVSFVCCMT. A disulfide bond links C98 and C190. The chain crosses the membrane as a helical span at residues 101–121; that stretch reads QMYFVFCVGVAECILLAFMAY. Residues 122 to 140 are Cytoplasmic-facing; that stretch reads DRYVAICYPLNYVPIISQK. Residues 141–161 form a helical membrane-spanning segment; that stretch reads VCVRLVGTAWFFGLINGIFLE. Residues 162-198 are Extracellular-facing; it reads YISFREPFRRDNHIESFFCEAPIVIGLSCGDPQFSLW. The chain crosses the membrane as a helical span at residues 199–218; sequence AIFADAIVVILSPMVLTVTS. Residues 219 to 238 are Cytoplasmic-facing; it reads YVHILATILSKASSSGRGKT. Residues 239-259 form a helical membrane-spanning segment; that stretch reads FSTCASHLTVVIFLYTSAMFS. Topologically, residues 260–272 are extracellular; sequence YMNPHSTHGPDKD. The chain crosses the membrane as a helical span at residues 273–293; that stretch reads KPFSLLYTIITPMCNPIIYSF. The Cytoplasmic segment spans residues 294–317; it reads RNKEIKEAMVRALGRTRLAQPQSV.

The protein belongs to the G-protein coupled receptor 1 family.

It is found in the cell membrane. Its function is as follows. Odorant receptor. The protein is Olfactory receptor 10AD1 (OR10AD1) of Homo sapiens (Human).